We begin with the raw amino-acid sequence, 190 residues long: Holliday junction branch migration complex subunit RuvA (190 aa).

Positions 1–64 (MIGKLTGTLL…EDAQLLYGFG (64 aa)) are domain I. The domain II stretch occupies residues 65-137 (TAQERQAFRE…LKGKLGADVG (73 aa)). The tract at residues 137-141 (GVRAH) is flexible linker. Residues 142 to 190 (AANDNQADILQALLALGYNDKEAAAALKALPADVGVSEGIKLALKSLSK) are domain III.

Belongs to the RuvA family. Homotetramer. Forms an RuvA(8)-RuvB(12)-Holliday junction (HJ) complex. HJ DNA is sandwiched between 2 RuvA tetramers; dsDNA enters through RuvA and exits via RuvB. An RuvB hexamer assembles on each DNA strand where it exits the tetramer. Each RuvB hexamer is contacted by two RuvA subunits (via domain III) on 2 adjacent RuvB subunits; this complex drives branch migration. In the full resolvosome a probable DNA-RuvA(4)-RuvB(12)-RuvC(2) complex forms which resolves the HJ.

It is found in the cytoplasm. In terms of biological role, the RuvA-RuvB-RuvC complex processes Holliday junction (HJ) DNA during genetic recombination and DNA repair, while the RuvA-RuvB complex plays an important role in the rescue of blocked DNA replication forks via replication fork reversal (RFR). RuvA specifically binds to HJ cruciform DNA, conferring on it an open structure. The RuvB hexamer acts as an ATP-dependent pump, pulling dsDNA into and through the RuvAB complex. HJ branch migration allows RuvC to scan DNA until it finds its consensus sequence, where it cleaves and resolves the cruciform DNA. The polypeptide is Holliday junction branch migration complex subunit RuvA (Acidovorax sp. (strain JS42)).